Reading from the N-terminus, the 258-residue chain is Proliferating cell nuclear antigen (258 aa).

The DNA-binding element occupies 61–80 (NCDRSLSLGLSLVSLSKILK).

It belongs to the PCNA family. Homotrimer. Forms a complex with activator 1 heteropentamer in the presence of ATP.

It is found in the nucleus. Its function is as follows. This protein is an auxiliary protein of DNA polymerase delta and is involved in the control of eukaryotic DNA replication by increasing the polymerase's processibility during elongation of the leading strand. The protein is Proliferating cell nuclear antigen (pcna) of Dictyostelium discoideum (Social amoeba).